The following is a 160-amino-acid chain: AP-1 complex subunit sigma-2 (160 aa).

This sequence belongs to the adaptor complexes small subunit family. As to quaternary structure, adaptor protein complex 1 (AP-1) is a heterotetramer composed of two large adaptins (gamma-type subunit AP1G1 and beta-type subunit AP1B1), a medium adaptin (mu-type subunit AP1M1 or AP1M2) and a small adaptin (sigma-type subunit AP1S1 or AP1S2 or AP1S3). Binds to MUC1. In terms of tissue distribution, widely expressed.

The protein localises to the golgi apparatus. Its subcellular location is the cytoplasmic vesicle membrane. The protein resides in the membrane. It localises to the clathrin-coated pit. Functionally, subunit of clathrin-associated adaptor protein complex 1 that plays a role in protein sorting in the late-Golgi/trans-Golgi network (TGN) and/or endosomes. The AP complexes mediate both the recruitment of clathrin to membranes and the recognition of sorting signals within the cytosolic tails of transmembrane cargo molecules. The sequence is that of AP-1 complex subunit sigma-2 (Ap1s2) from Mus musculus (Mouse).